The following is a 93-amino-acid chain: Small ribosomal subunit protein uS19 (93 aa).

It belongs to the universal ribosomal protein uS19 family.

Functionally, protein S19 forms a complex with S13 that binds strongly to the 16S ribosomal RNA. The polypeptide is Small ribosomal subunit protein uS19 (Rubrobacter xylanophilus (strain DSM 9941 / JCM 11954 / NBRC 16129 / PRD-1)).